A 491-amino-acid chain; its full sequence is Glutamyl-tRNA(Gln) amidotransferase subunit A (491 aa).

Residues Lys77 and Ser152 each act as charge relay system in the active site. Ser176 functions as the Acyl-ester intermediate in the catalytic mechanism.

The protein belongs to the amidase family. GatA subfamily. As to quaternary structure, heterotrimer of A, B and C subunits.

It catalyses the reaction L-glutamyl-tRNA(Gln) + L-glutamine + ATP + H2O = L-glutaminyl-tRNA(Gln) + L-glutamate + ADP + phosphate + H(+). Functionally, allows the formation of correctly charged Gln-tRNA(Gln) through the transamidation of misacylated Glu-tRNA(Gln) in organisms which lack glutaminyl-tRNA synthetase. The reaction takes place in the presence of glutamine and ATP through an activated gamma-phospho-Glu-tRNA(Gln). The polypeptide is Glutamyl-tRNA(Gln) amidotransferase subunit A (Chlamydia trachomatis serovar A (strain ATCC VR-571B / DSM 19440 / HAR-13)).